Here is a 122-residue protein sequence, read N- to C-terminus: NADPH-dependent 7-cyano-7-deazaguanine reductase (122 aa).

The active-site Thioimide intermediate is cysteine 34. The Proton donor role is filled by aspartate 41. Substrate contacts are provided by residues 56–58 (VEL) and 75–76 (HE).

It belongs to the GTP cyclohydrolase I family. QueF type 1 subfamily.

The protein resides in the cytoplasm. The enzyme catalyses 7-aminomethyl-7-carbaguanine + 2 NADP(+) = 7-cyano-7-deazaguanine + 2 NADPH + 3 H(+). It functions in the pathway tRNA modification; tRNA-queuosine biosynthesis. In terms of biological role, catalyzes the NADPH-dependent reduction of 7-cyano-7-deazaguanine (preQ0) to 7-aminomethyl-7-deazaguanine (preQ1). This chain is NADPH-dependent 7-cyano-7-deazaguanine reductase, found in Anaeromyxobacter dehalogenans (strain 2CP-C).